The primary structure comprises 481 residues: RAC-beta serine/threonine-protein kinase (481 aa).

Met1 carries the N-acetylmethionine modification. Residues 5 to 108 (SVIKEGWLHK…WIRAIQMVAN (104 aa)) form the PH domain. Residue Ser34 is modified to Phosphoserine. Residues Cys60 and Cys77 are joined by a disulfide bond. Ser126 is modified (phosphoserine). Residues Ser128 and Ser131 are each glycosylated (O-linked (GlcNAc) serine). The Protein kinase domain maps to 152-409 (FDYLKLLGKG…AKEVMEHRFF (258 aa)). ATP-binding positions include 158-166 (LGKGTFGKV) and Lys181. Residue Asp275 is the Proton acceptor of the active site. Mn(2+) contacts are provided by Asn280 and Asp293. Thr306 carries O-linked (GlcNAc) threonine glycosylation. A Phosphothreonine; by PDPK1 modification is found at Thr309. An O-linked (GlcNAc) threonine glycan is attached at Thr313. An AGC-kinase C-terminal domain is found at 410–481 (LSINWQDVVQ…QFSYSASIRE (72 aa)). A Phosphoserine modification is found at Ser447. Thr451 is modified (phosphothreonine). Phosphoserine occurs at positions 461, 474, and 478. An O-linked (GlcNAc) serine; alternate glycan is attached at Ser474.

This sequence belongs to the protein kinase superfamily. AGC Ser/Thr protein kinase family. RAC subfamily. In terms of assembly, interacts with BTBD10. Interacts with KCTD20. Interacts (via PH domain) with MTCP1, TCL1A and TCL1B; this interaction may facilitate AKT2 oligomerization and phosphorylation, hence increasing kinase activity. Interacts with PHB2; this interaction may be important for myogenic differentiation. Interacts (when phosphorylated) with CLIP3; this interaction promotes cell membrane localization. Interacts with WDFY2 (via WD repeats 1-3). Post-translationally, phosphorylation on Thr-309 and Ser-474 is required for full activity. Phosphorylation of the activation loop at Thr-309 by PDPK1/PDK1 is a prerequisite for full activation. Phosphorylated and activated by PDPK1/PDK1 in the presence of phosphatidylinositol 3,4,5-trisphosphate. Phosphorylation by mTORC2 in response to growth factors plays a key role in AKT1 activation: mTORC2 phosphorylates different sites depending on the context, such as Ser-474 or Ser-478, thereby facilitating subsequent phosphorylation of the activation loop by PDPK1/PDK1. Ubiquitinated; undergoes both 'Lys-48'- and 'Lys-63'-linked polyubiquitination. TRAF6-induced 'Lys-63'-linked AKT2 ubiquitination. When fully phosphorylated and translocated into the nucleus, undergoes 'Lys-48'-polyubiquitination catalyzed by TTC3, leading to its degradation by the proteasome. In terms of processing, O-GlcNAcylation at Thr-306 and Thr-313 inhibits activating phosphorylation at Thr-309 via disrupting the interaction between AKT and PDPK1/PDK1. Expressed in adipocytes and hepatocytes (at protein level). Expressed at low levels in skeletal muscle (at protein level).

It localises to the cytoplasm. The protein resides in the nucleus. It is found in the cell membrane. The protein localises to the early endosome. It catalyses the reaction L-seryl-[protein] + ATP = O-phospho-L-seryl-[protein] + ADP + H(+). The enzyme catalyses L-threonyl-[protein] + ATP = O-phospho-L-threonyl-[protein] + ADP + H(+). Phosphorylation at Thr-309 (in the kinase domain) and Ser-474 (in the C-terminal regulatory region) is required for full activation. In adipocytes and hepatocytes, the activation is induced by insulin. AKT2 phosphorylation of PKP1 is induced by insulin. Its function is as follows. Serine/threonine kinase closely related to AKT1 and AKT3. All 3 enzymes, AKT1, AKT2 and AKT3, are collectively known as AKT kinase. AKT regulates many processes including metabolism, proliferation, cell survival, growth and angiogenesis, through the phosphorylation of a range of downstream substrates. Over 100 substrates have been reported so far, although for most of them, the precise AKT kinase catalyzing the reaction was not specified. AKT regulates glucose uptake by mediating insulin-induced translocation of the SLC2A4/GLUT4 glucose transporter to the cell surface. Phosphorylation of PTPN1 at 'Ser-50' negatively modulates its phosphatase activity preventing dephosphorylation of the insulin receptor and the attenuation of insulin signaling. Phosphorylation of TBC1D4 triggers the binding of this effector to inhibitory 14-3-3 proteins, which is required for insulin-stimulated glucose transport. AKT also regulates the storage of glucose in the form of glycogen by phosphorylating GSK3A at 'Ser-21' and GSK3B at 'Ser-9', resulting in inhibition of its kinase activity. Phosphorylation of GSK3 isoforms by AKT is also thought to be one mechanism by which cell proliferation is driven. AKT also regulates cell survival via the phosphorylation of MAP3K5 (apoptosis signal-related kinase). Phosphorylation of 'Ser-83' decreases MAP3K5 kinase activity stimulated by oxidative stress and thereby prevents apoptosis. AKT mediates insulin-stimulated protein synthesis by phosphorylating TSC2 at 'Ser-939' and 'Thr-1462', thereby activating mTORC1 signaling and leading to both phosphorylation of 4E-BP1 and in activation of RPS6KB1. AKT is involved in the phosphorylation of members of the FOXO factors (Forkhead family of transcription factors), leading to binding of 14-3-3 proteins and cytoplasmic localization. In particular, FOXO1 is phosphorylated at 'Thr-24', 'Ser-256' and 'Ser-319'. FOXO3 and FOXO4 are phosphorylated on equivalent sites. AKT has an important role in the regulation of NF-kappa-B-dependent gene transcription and positively regulates the activity of CREB1 (cyclic AMP (cAMP)-response element binding protein). The phosphorylation of CREB1 induces the binding of accessory proteins that are necessary for the transcription of pro-survival genes such as BCL2 and MCL1. AKT phosphorylates 'Ser-454' on ATP citrate lyase (ACLY), thereby potentially regulating ACLY activity and fatty acid synthesis. Activates the 3B isoform of cyclic nucleotide phosphodiesterase (PDE3B) via phosphorylation of 'Ser-273', resulting in reduced cyclic AMP levels and inhibition of lipolysis. Phosphorylates PIKFYVE on 'Ser-318', which results in increased PI(3)P-5 activity. The Rho GTPase-activating protein DLC1 is another substrate and its phosphorylation is implicated in the regulation cell proliferation and cell growth. AKT plays a role as key modulator of the AKT-mTOR signaling pathway controlling the tempo of the process of newborn neurons integration during adult neurogenesis, including correct neuron positioning, dendritic development and synapse formation. Signals downstream of phosphatidylinositol 3-kinase (PI(3)K) to mediate the effects of various growth factors such as platelet-derived growth factor (PDGF), epidermal growth factor (EGF), insulin and insulin-like growth factor 1 (IGF1). AKT mediates the antiapoptotic effects of IGF1. Essential for the SPATA13-mediated regulation of cell migration and adhesion assembly and disassembly. May be involved in the regulation of the placental development. In response to lysophosphatidic acid stimulation, inhibits the ciliogenesis cascade. In this context, phosphorylates WDR44, hence stabilizing its interaction with Rab11 and preventing the formation of the ciliogenic Rab11-FIP3-RAB3IP complex. Also phosphorylates RAB3IP/Rabin8, thus may affect RAB3IP guanine nucleotide exchange factor (GEF) activity toward Rab8, which is important for cilia growth. Phosphorylates PKP1, facilitating its interaction with YWHAG and translocation to the nucleus, ultimately resulting in a reduction in keratinocyte intercellular adhesion. Phosphorylation of PKP1 increases PKP1 protein stability, translocation to the cytoplasm away from desmosome plaques and PKP1-driven cap-dependent translation. Several AKT2-specific substrates have been identified, including ANKRD2, C2CD5, CLK2 and PITX2. May play a role in myoblast differentiation. In this context, may act through PITX2 phosphorylation. Unphosphorylated PITX2 associates with an ELAVL1/HuR-containing complex, which stabilizes cyclin mRNA and ensuring cell proliferation. Phosphorylation by AKT2 impairs this association, leading to CCND1 mRNA destabilization and progression towards differentiation. Also involved in the negative regulation of myogenesis in response to stress conditions. In this context, acts by phosphorylating ANKRD2. May also be a key regulator of glucose uptake. Regulates insulin-stimulated glucose transport by the increase of glucose transporter GLUT4 translocation from intracellular stores to the plasma membrane. In this context, acts by phosphorylating C2CD5/CDP138 on 'Ser-197' in insulin-stimulated adipocytes. Through the phosphorylation of CLK2 on 'Thr-343', involved in insulin-regulated suppression of hepatic gluconeogenesis. This Rattus norvegicus (Rat) protein is RAC-beta serine/threonine-protein kinase.